Reading from the N-terminus, the 320-residue chain is Ferrochelatase (320 aa).

Positions 194 and 275 each coordinate Fe cation.

The protein belongs to the ferrochelatase family.

The protein localises to the cytoplasm. The enzyme catalyses heme b + 2 H(+) = protoporphyrin IX + Fe(2+). It participates in porphyrin-containing compound metabolism; protoheme biosynthesis; protoheme from protoporphyrin-IX: step 1/1. Its function is as follows. Catalyzes the ferrous insertion into protoporphyrin IX. The sequence is that of Ferrochelatase from Stenotrophomonas maltophilia (strain R551-3).